The following is a 205-amino-acid chain: Glycerol-3-phosphate acyltransferase (205 aa).

The next 5 helical transmembrane spans lie at 6-26 (STVL…AVVV), 55-75 (KAAI…VWLV), 89-109 (VALV…FRFV), 120-140 (ILLA…LVIA), and 162-182 (ALMF…VLLI).

This sequence belongs to the PlsY family. Probably interacts with PlsX.

Its subcellular location is the cell inner membrane. It carries out the reaction an acyl phosphate + sn-glycerol 3-phosphate = a 1-acyl-sn-glycero-3-phosphate + phosphate. It participates in lipid metabolism; phospholipid metabolism. Catalyzes the transfer of an acyl group from acyl-phosphate (acyl-PO(4)) to glycerol-3-phosphate (G3P) to form lysophosphatidic acid (LPA). This enzyme utilizes acyl-phosphate as fatty acyl donor, but not acyl-CoA or acyl-ACP. This is Glycerol-3-phosphate acyltransferase from Herminiimonas arsenicoxydans.